The following is a 782-amino-acid chain: Protein VAC14 homolog (782 aa).

The residue at position 1 (Met1) is an N-acetylmethionine. HEAT repeat units lie at residues 5–42 (KDFA…EFVA), 89–126 (LYLK…VARG), 171–208 (FDLV…VPDI), and 212–249 (DYLP…EIKK). Position 11 is a phosphothreonine (Thr11). Disordered stretches follow at residues 335 to 372 (EDDE…DGSC) and 471 to 517 (SSPA…LECS). Residues 438 to 475 (RHTDSLFPILLQTLSDESDEVILKDLEVLAEIASSPAG) form an HEAT 5 repeat. The segment covering 478 to 488 (DDPGPLDGPDL) has biased composition (low complexity). Thr499 is subject to Phosphothreonine. Residues 506–517 (LNTSGTKGLECS) are compositionally biased toward polar residues. Ser517 is subject to Phosphoserine. Residues 560 to 598 (LNAENIFHSMADILLREEDLKFASTMVHALNTILLTSTE) form an HEAT 6 repeat. Ser743 carries the post-translational modification Phosphoserine. The mediates interaction with the PDZ domain of NOS1 stretch occupies residues 773-777 (GDHLD).

Belongs to the VAC14 family. As to quaternary structure, forms pentamers. Component of the PI(3,5)P2 regulatory complex/PAS complex, at least composed of PIKFYVE, FIG4 and VAC14. VAC14 nucleates the assembly of the complex and serves as a scaffold by pentamerizing into a star-shaped structure, which can bind a single copy each of PIKFYVE and FIG4 and coordinates their activities. Interacts with NOS1. (Microbial infection) Interacts with HTLV-1 Tax. In terms of tissue distribution, ubiquitously expressed.

It is found in the endosome membrane. It localises to the microsome membrane. Its function is as follows. Scaffold protein component of the PI(3,5)P2 regulatory complex which regulates both the synthesis and turnover of phosphatidylinositol 3,5-bisphosphate (PtdIns(3,5)P2). Pentamerizes into a star-shaped structure and nucleates the assembly of the complex. The pentamer binds a single copy each of PIKFYVE and FIG4 and coordinates both PIKfyve kinase activity and FIG4 phosphatase activity, being required to maintain normal levels of phosphatidylinositol 3-phosphate (PtdIns(3)P) and phosphatidylinositol 5-phosphate (PtdIns(5)P). Plays a role in the biogenesis of endosome carrier vesicles (ECV) / multivesicular bodies (MVB) transport intermediates from early endosomes. The chain is Protein VAC14 homolog (VAC14) from Homo sapiens (Human).